A 255-amino-acid chain; its full sequence is 5-oxoprolinase subunit A (255 aa).

The protein belongs to the LamB/PxpA family. Forms a complex composed of PxpA, PxpB and PxpC.

The enzyme catalyses 5-oxo-L-proline + ATP + 2 H2O = L-glutamate + ADP + phosphate + H(+). Its function is as follows. Catalyzes the cleavage of 5-oxoproline to form L-glutamate coupled to the hydrolysis of ATP to ADP and inorganic phosphate. This is 5-oxoprolinase subunit A from Campylobacter jejuni subsp. jejuni serotype O:6 (strain 81116 / NCTC 11828).